A 134-amino-acid chain; its full sequence is Small ribosomal subunit protein uS11 (134 aa).

Residues 1–24 (MATKMAGVKRAGRKRKERKNIERG) form a disordered region.

This sequence belongs to the universal ribosomal protein uS11 family. In terms of assembly, part of the 30S ribosomal subunit. Interacts with proteins S7 and S18. Binds to IF-3.

Its function is as follows. Located on the platform of the 30S subunit, it bridges several disparate RNA helices of the 16S rRNA. Forms part of the Shine-Dalgarno cleft in the 70S ribosome. The protein is Small ribosomal subunit protein uS11 of Acetivibrio thermocellus (strain ATCC 27405 / DSM 1237 / JCM 9322 / NBRC 103400 / NCIMB 10682 / NRRL B-4536 / VPI 7372) (Clostridium thermocellum).